The chain runs to 270 residues: Mediator of RNA polymerase II transcription subunit 4 (270 aa).

The tract at residues 1 to 22 (MAASSSGEKEKERLGGGLGVAG) is disordered. At Ala-2 the chain carries N-acetylalanine. 2 coiled-coil regions span residues 24 to 48 (NSTR…IEML) and 90 to 131 (HHEM…AKEK). At Ser-32 the chain carries Phosphoserine. The disordered stretch occupies residues 226 to 270 (DMSMNMLPPNHSSDFLLEPPGHNKENEDDVEIMSTDSSSSSSESD). A compositionally biased stretch (low complexity) spans 259-270 (STDSSSSSSESD).

This sequence belongs to the Mediator complex subunit 4 family. As to quaternary structure, component of the Mediator complex, which is composed of MED1, MED4, MED6, MED7, MED8, MED9, MED10, MED11, MED12, MED13, MED13L, MED14, MED15, MED16, MED17, MED18, MED19, MED20, MED21, MED22, MED23, MED24, MED25, MED26, MED27, MED29, MED30, MED31, CCNC, CDK8 and CDC2L6/CDK11. The MED12, MED13, CCNC and CDK8 subunits form a distinct module termed the CDK8 module. Mediator containing the CDK8 module is less active than Mediator lacking this module in supporting transcriptional activation. Individual preparations of the Mediator complex lacking one or more distinct subunits have been variously termed ARC, CRSP, DRIP, PC2, SMCC and TRAP.

The protein resides in the nucleus. Its function is as follows. Component of the Mediator complex, a coactivator involved in the regulated transcription of nearly all RNA polymerase II-dependent genes. Mediator functions as a bridge to convey information from gene-specific regulatory proteins to the basal RNA polymerase II transcription machinery. Mediator is recruited to promoters by direct interactions with regulatory proteins and serves as a scaffold for the assembly of a functional preinitiation complex with RNA polymerase II and the general transcription factors. The sequence is that of Mediator of RNA polymerase II transcription subunit 4 (MED4) from Homo sapiens (Human).